Here is a 342-residue protein sequence, read N- to C-terminus: Uricase (342 aa).

Active-site charge relay system residues include K35 and T80. Urate is bound by residues T80, D81, F204, R221, V269, Q270, and N296. The active-site Charge relay system is H298. A Microbody targeting signal motif is present at residues 340–342; it reads SHL.

It belongs to the uricase family. Malpighian tubules.

It localises to the peroxisome. The catalysed reaction is urate + O2 + H2O = 5-hydroxyisourate + H2O2. It participates in purine metabolism; urate degradation; (S)-allantoin from urate: step 1/3. With respect to regulation, repressed by 20-hydroxyecdysone. Catalyzes the oxidation of uric acid to 5-hydroxyisourate, which is further processed to form (S)-allantoin. The sequence is that of Uricase (Uro) from Drosophila virilis (Fruit fly).